The sequence spans 260 residues: Ubiquinone/menaquinone biosynthesis C-methyltransferase UbiE (260 aa).

S-adenosyl-L-methionine is bound by residues Thr83, Asp104, 132–133 (NA), and Ser149.

The protein belongs to the class I-like SAM-binding methyltransferase superfamily. MenG/UbiE family.

The catalysed reaction is a 2-demethylmenaquinol + S-adenosyl-L-methionine = a menaquinol + S-adenosyl-L-homocysteine + H(+). It carries out the reaction a 2-methoxy-6-(all-trans-polyprenyl)benzene-1,4-diol + S-adenosyl-L-methionine = a 5-methoxy-2-methyl-3-(all-trans-polyprenyl)benzene-1,4-diol + S-adenosyl-L-homocysteine + H(+). It participates in quinol/quinone metabolism; menaquinone biosynthesis; menaquinol from 1,4-dihydroxy-2-naphthoate: step 2/2. The protein operates within cofactor biosynthesis; ubiquinone biosynthesis. Methyltransferase required for the conversion of demethylmenaquinol (DMKH2) to menaquinol (MKH2) and the conversion of 2-polyprenyl-6-methoxy-1,4-benzoquinol (DDMQH2) to 2-polyprenyl-3-methyl-6-methoxy-1,4-benzoquinol (DMQH2). The protein is Ubiquinone/menaquinone biosynthesis C-methyltransferase UbiE of Vibrio vulnificus (strain CMCP6).